A 278-amino-acid chain; its full sequence is Tryptophan synthase alpha chain (278 aa).

Active-site proton acceptor residues include Glu50 and Asp61.

Belongs to the TrpA family. Tetramer of two alpha and two beta chains.

It carries out the reaction (1S,2R)-1-C-(indol-3-yl)glycerol 3-phosphate + L-serine = D-glyceraldehyde 3-phosphate + L-tryptophan + H2O. It participates in amino-acid biosynthesis; L-tryptophan biosynthesis; L-tryptophan from chorismate: step 5/5. The alpha subunit is responsible for the aldol cleavage of indoleglycerol phosphate to indole and glyceraldehyde 3-phosphate. The polypeptide is Tryptophan synthase alpha chain (Rhodopseudomonas palustris (strain TIE-1)).